The sequence spans 373 residues: Transcription factor NF-E2 45 kDa subunit (373 aa).

Residues 1–83 (MSPCPPQQSR…SGFPLPPPPY (83 aa)) are required for interaction with MAPK8. The segment at 1–206 (MSPCPPQQSR…PAAETPLALE (206 aa)) is transactivation domain. 2 short sequence motifs (PXY motif) span residues 61-65 (PPTTY) and 79-83 (PPPPY). Residues 127–150 (LDIGLPAGPPKPQEDPESDSGLSL) form a disordered region. Residue Ser157 is modified to Phosphoserine; by MAPK8. At Ser170 the chain carries Phosphoserine; by PKA. Residues 205 to 226 (LEPSSGPVRAKPTARGEAGSRD) form a disordered region. Residues 266 to 329 (LVRDIRRRGK…EVMRQQLTEL (64 aa)) form the bZIP domain. Positions 268–287 (RDIRRRGKNKVAAQNCRKRK) are basic motif. Residues 291–298 (IVQLEREL) are leucine-zipper. Residue Lys368 forms a Glycyl lysine isopeptide (Lys-Gly) (interchain with G-Cter in SUMO1) linkage.

It belongs to the bZIP family. CNC subfamily. As to quaternary structure, homodimer; can bind DNA as a homodimer. Erythroid transcription activator nuclear factor erythroid-derived 2 (NF-E2), composed of a heterodimer of NFE2 and MAFK, possesses transactivation activity on beta-globin. Also forms high affinity heterodimer with MAFG; the interaction promotes erythropoiesis. Interacts (via the PXY motif 1) with ITCH (via the WW 1 domain); the interaction promotes 'Lys63'-linked ubiquitination of NFE2, translocates it to the cytoplasm and inhibits its transactivation activity. Interacts with KMT2D/MLL2; the interaction promotes transactivation of the beta-globin locus. Interacts with MAPK8 (phosphorylated form); the interaction leads to phosphorylation of NFE2 in undifferentiated cells. Phosphorylated on serine residues. In undifferentiated erythrocytes, phosphorylated by MAPK8 which then leads to ubiquitination and protein degradation. Post-translationally, sumoylated. Sumoylation is required for translocation to nuclear bodies PODs, anchoring to the gene loci, and transactivation of the beta-globin gene. In terms of processing, ubiquitinated mainly by 'Lys63'-linked ubiquitin. Polyubiquitination with 'Lys63'-linked ubiquitin by ITCH retains NFE2 in the cytoplasm preventing its transactivation activity. In undifferentiated erythrocyte, ubiquitinated after MAPK8-mediatd phosphorylation leading to protein degradation. Expressed in hematopoietic cells and also in colon and testis.

The protein resides in the nucleus. It is found in the PML body. Its subcellular location is the cytoplasm. Component of the NF-E2 complex essential for regulating erythroid and megakaryocytic maturation and differentiation. Binds to the hypersensitive site 2 (HS2) of the beta-globin control region (LCR). This subunit (NFE2) recognizes the TCAT/C sequence of the AP-1-like core palindrome present in a number of erythroid and megakaryocytic gene promoters. Requires MAFK or other small MAF proteins for binding to the NF-E2 motif. May play a role in all aspects of hemoglobin production from globin and heme synthesis to procurement of iron. This Homo sapiens (Human) protein is Transcription factor NF-E2 45 kDa subunit (NFE2).